The primary structure comprises 350 residues: Membrane progestin receptor alpha (350 aa).

Residues 1 to 80 (MATMVAQKLS…HNEAVNVWTH (80 aa)) lie on the Cytoplasmic side of the membrane. A helical membrane pass occupies residues 81–101 (LLAALVLLLRLAIFVGTVDFW). Residues 102-105 (GDPH) are Extracellular-facing. A helical membrane pass occupies residues 106–126 (ALPLFIIVLASFTYLSLSALA). Over 127–139 (HLLQAKSEFWHYS) the chain is Cytoplasmic. A helical membrane pass occupies residues 140–160 (FFFLDYVGVAVYQFGSALAHF). The Extracellular portion of the chain corresponds to 161–165 (YYAIE). Residues 166-186 (PAWHAQVQTIFLPMAAFLAWL) traverse the membrane as a helical segment. The Cytoplasmic portion of the chain corresponds to 187–239 (SCTGSCYNKYIQKPGLLGRTCQEVPSALAYALDISPVAHRILASPEPATDDPA). Residues 240–260 (LLYHKCQVVFFLLAAAFFSAF) form a helical membrane-spanning segment. Residues 261-278 (MPERWFPGSCHIFGQGHQ) lie on the Extracellular side of the membrane. The helical transmembrane segment at 279 to 299 (LFHVFLVLCTLAQLEAVALDY) threads the bilayer. At 300–318 (EARRPIYEPLHTRWPHNFS) the chain is on the cytoplasmic side. A helical transmembrane segment spans residues 319–339 (GLFLLTVGSSILTAFLLSQLV). Over 340–350 (RRKLDLDRKTQ) the chain is Extracellular.

It belongs to the ADIPOR family.

The protein resides in the cell membrane. Plasma membrane progesterone (P4) receptor coupled to G proteins. Seems to act through a G(i) mediated pathway. May be involved in oocyte maturation. Involved in neurosteroid inhibition of apoptosis. Also binds dehydroepiandrosterone (DHEA), pregnanolone, pregnenolone and allopregnanolone. The sequence is that of Membrane progestin receptor alpha (PAQR7) from Sus scrofa (Pig).